Reading from the N-terminus, the 279-residue chain is Shikimate dehydrogenase (NADP(+)) (279 aa).

Residues 14-16 (SIS) and threonine 63 contribute to the shikimate site. The active-site Proton acceptor is the lysine 67. NADP(+) is bound at residue glutamate 79. Shikimate contacts are provided by asparagine 88 and aspartate 103. NADP(+) contacts are provided by residues 127–131 (GAGGA), 151–156 (NRTYEK), and methionine 219. Residue tyrosine 221 participates in shikimate binding. Glycine 242 is a binding site for NADP(+).

This sequence belongs to the shikimate dehydrogenase family. Homodimer.

The enzyme catalyses shikimate + NADP(+) = 3-dehydroshikimate + NADPH + H(+). Its pathway is metabolic intermediate biosynthesis; chorismate biosynthesis; chorismate from D-erythrose 4-phosphate and phosphoenolpyruvate: step 4/7. Functionally, involved in the biosynthesis of the chorismate, which leads to the biosynthesis of aromatic amino acids. Catalyzes the reversible NADPH linked reduction of 3-dehydroshikimate (DHSA) to yield shikimate (SA). In Caldicellulosiruptor saccharolyticus (strain ATCC 43494 / DSM 8903 / Tp8T 6331), this protein is Shikimate dehydrogenase (NADP(+)).